Here is a 249-residue protein sequence, read N- to C-terminus: Probable transcriptional regulatory protein DICTH_1505 (249 aa).

The protein belongs to the TACO1 family.

The protein resides in the cytoplasm. This Dictyoglomus thermophilum (strain ATCC 35947 / DSM 3960 / H-6-12) protein is Probable transcriptional regulatory protein DICTH_1505.